The chain runs to 175 residues: NADH-ubiquinone oxidoreductase chain 6 (175 aa).

5 consecutive transmembrane segments (helical) span residues Met1–Ser21, Ser25–Leu45, Gly48–Phe68, Thr88–Ile108, and Tyr149–Met169.

It belongs to the complex I subunit 6 family. As to quaternary structure, core subunit of respiratory chain NADH dehydrogenase (Complex I) which is composed of 45 different subunits.

The protein localises to the mitochondrion inner membrane. The enzyme catalyses a ubiquinone + NADH + 5 H(+)(in) = a ubiquinol + NAD(+) + 4 H(+)(out). In terms of biological role, core subunit of the mitochondrial membrane respiratory chain NADH dehydrogenase (Complex I) which catalyzes electron transfer from NADH through the respiratory chain, using ubiquinone as an electron acceptor. Essential for the catalytic activity and assembly of complex I. The chain is NADH-ubiquinone oxidoreductase chain 6 (MT-ND6) from Urotrichus talpoides (Japanese shrew mole).